We begin with the raw amino-acid sequence, 157 residues long: Cell cycle regulator of non-homologous end joining (157 aa).

M1 is modified (N-acetylmethionine). The short motif at 1–21 (METLKSKTKTRVLPSWMTAPV) is the KBM element. Residues 80-91 (KPWEQRSLEATD) show a composition bias toward basic and acidic residues. The disordered stretch occupies residues 80–148 (KPWEQRSLEA…EEEKEEEDAL (69 aa)). The span at 96-106 (SPPCSSSPGSS) shows a compositional bias: low complexity. Positions 147–157 (ALKYVREIFFS) match the XLM motif.

In terms of assembly, interacts (via KBM motif) with XRCC5/Ku80 and XRCC6/Ku70 heterodimer. Interacts (via XLF motif) with TRIM28/KAP1, ATM, MRE11, NBN and RAD50. Interacts with splicing factor SF3B1. Interacts with ERCC6L2; this interaction is DNA independent.

It localises to the cytoplasm. Its subcellular location is the nucleus. The protein resides in the chromosome. Its function is as follows. Cell-cycle-specific regulator of classical non-homologous end joining (NHEJ) of DNA double-strand break (DSB) repair, which can act both as an activator or inhibitor of NHEJ, depending on the cell cycle phase. Acts as a regulator of DNA repair pathway choice by specifically inhibiting classical NHEJ during the S and G2 phases, thereby promoting error-free repair by homologous recombination during cell cycle phases when sister chromatids are present. Preferentially protects single-stranded overhangs at break sites by inhibiting classical NHEJ, thereby creating a local environment that favors homologous recombination. Acts via interaction with XRCC5/Ku80 and XRCC6/Ku70. In contrast, acts as an activator of NHEJ during G1 phase of the cell cycle: promotes classical NHEJ in G1 phase cells via multivalent interactions that increase the affinity of DNA damage response proteins for DSB-associated chromatin. Also involved in immunoglobulin V(D)J recombination. May also act as an indirect regulator of proteasome. The sequence is that of Cell cycle regulator of non-homologous end joining from Mus musculus (Mouse).